A 101-amino-acid chain; its full sequence is Putative pterin-4-alpha-carbinolamine dehydratase (101 aa).

It belongs to the pterin-4-alpha-carbinolamine dehydratase family.

It carries out the reaction (4aS,6R)-4a-hydroxy-L-erythro-5,6,7,8-tetrahydrobiopterin = (6R)-L-erythro-6,7-dihydrobiopterin + H2O. The polypeptide is Putative pterin-4-alpha-carbinolamine dehydratase (Ralstonia pickettii (strain 12J)).